The sequence spans 365 residues: UDP-N-acetylglucosamine--N-acetylmuramyl-(pentapeptide) pyrophosphoryl-undecaprenol N-acetylglucosamine transferase (365 aa).

Residues 11 to 13 (TGG), Asn124, Arg165, Ser192, Ile246, and Gln291 contribute to the UDP-N-acetyl-alpha-D-glucosamine site.

Belongs to the glycosyltransferase 28 family. MurG subfamily.

It localises to the cell inner membrane. The enzyme catalyses di-trans,octa-cis-undecaprenyl diphospho-N-acetyl-alpha-D-muramoyl-L-alanyl-D-glutamyl-meso-2,6-diaminopimeloyl-D-alanyl-D-alanine + UDP-N-acetyl-alpha-D-glucosamine = di-trans,octa-cis-undecaprenyl diphospho-[N-acetyl-alpha-D-glucosaminyl-(1-&gt;4)]-N-acetyl-alpha-D-muramoyl-L-alanyl-D-glutamyl-meso-2,6-diaminopimeloyl-D-alanyl-D-alanine + UDP + H(+). The protein operates within cell wall biogenesis; peptidoglycan biosynthesis. Cell wall formation. Catalyzes the transfer of a GlcNAc subunit on undecaprenyl-pyrophosphoryl-MurNAc-pentapeptide (lipid intermediate I) to form undecaprenyl-pyrophosphoryl-MurNAc-(pentapeptide)GlcNAc (lipid intermediate II). The polypeptide is UDP-N-acetylglucosamine--N-acetylmuramyl-(pentapeptide) pyrophosphoryl-undecaprenol N-acetylglucosamine transferase (Nitratidesulfovibrio vulgaris (strain ATCC 29579 / DSM 644 / CCUG 34227 / NCIMB 8303 / VKM B-1760 / Hildenborough) (Desulfovibrio vulgaris)).